A 464-amino-acid polypeptide reads, in one-letter code: Argininosuccinate lyase (464 aa).

Belongs to the lyase 1 family. Argininosuccinate lyase subfamily.

It is found in the cytoplasm. It carries out the reaction 2-(N(omega)-L-arginino)succinate = fumarate + L-arginine. The protein operates within amino-acid biosynthesis; L-arginine biosynthesis; L-arginine from L-ornithine and carbamoyl phosphate: step 3/3. This Pseudomonas putida (strain W619) protein is Argininosuccinate lyase.